The sequence spans 263 residues: Endonuclease 8 (263 aa).

Pro2 acts as the Schiff-base intermediate with DNA in catalysis. Glu3 acts as the Proton donor in catalysis. Lys53 functions as the Proton donor; for beta-elimination activity in the catalytic mechanism. Residues Gln70, Arg125, and Asn169 each contribute to the DNA site. The FPG-type zinc-finger motif lies at 229-263 (KVFHRDGELCERCGGIIEKTTLSSRPFYWCPGCQH). Residue Arg253 is the Proton donor; for delta-elimination activity of the active site.

It belongs to the FPG family. Zn(2+) is required as a cofactor.

The catalysed reaction is 2'-deoxyribonucleotide-(2'-deoxyribose 5'-phosphate)-2'-deoxyribonucleotide-DNA = a 3'-end 2'-deoxyribonucleotide-(2,3-dehydro-2,3-deoxyribose 5'-phosphate)-DNA + a 5'-end 5'-phospho-2'-deoxyribonucleoside-DNA + H(+). In terms of biological role, involved in base excision repair of DNA damaged by oxidation or by mutagenic agents. Acts as a DNA glycosylase that recognizes and removes damaged bases. Has a preference for oxidized pyrimidines, such as thymine glycol, 5,6-dihydrouracil and 5,6-dihydrothymine. Has AP (apurinic/apyrimidinic) lyase activity and introduces nicks in the DNA strand. Cleaves the DNA backbone by beta-delta elimination to generate a single-strand break at the site of the removed base with both 3'- and 5'-phosphates. This chain is Endonuclease 8, found in Escherichia coli (strain 55989 / EAEC).